An 857-amino-acid polypeptide reads, in one-letter code: Catalase-peroxidase (857 aa).

Positions 207 to 330 form a cross-link, tryptophyl-tyrosyl-methioninium (Trp-Tyr) (with M-356); the sequence is WHSAGTYRVS…LAAVQMGLIY (124 aa). The Proton acceptor role is filled by histidine 208. The segment at residues 330-356 is a cross-link (tryptophyl-tyrosyl-methioninium (Tyr-Met) (with W-207)); the sequence is YVNPEGPNGKPDPIAAAKDIRETFGRM. A heme b-binding site is contributed by histidine 371.

It belongs to the peroxidase family. Peroxidase/catalase subfamily. As to quaternary structure, homodimer or homotetramer. It depends on heme b as a cofactor. Formation of the three residue Trp-Tyr-Met cross-link is important for the catalase, but not the peroxidase activity of the enzyme.

The enzyme catalyses H2O2 + AH2 = A + 2 H2O. The catalysed reaction is 2 H2O2 = O2 + 2 H2O. Its function is as follows. Bifunctional enzyme with both catalase and broad-spectrum peroxidase activity. This chain is Catalase-peroxidase, found in Rhodopirellula baltica (strain DSM 10527 / NCIMB 13988 / SH1).